We begin with the raw amino-acid sequence, 576 residues long: Enolase 4 (576 aa).

Positions 187 to 232 (ELRNEAMSEAPPQATPTSAPAKDKKGNDKGKKGNITENPLPPAEPP) are disordered. The segment covering 196 to 206 (APPQATPTSAP) has biased composition (low complexity). Residues 207 to 217 (AKDKKGNDKGK) are compositionally biased toward basic and acidic residues. Glu302 and Lys524 together coordinate substrate.

It belongs to the enolase family.

The catalysed reaction is (2R)-2-phosphoglycerate = phosphoenolpyruvate + H2O. It participates in carbohydrate degradation; glycolysis; pyruvate from D-glyceraldehyde 3-phosphate: step 4/5. The polypeptide is Enolase 4 (eno4) (Danio rerio (Zebrafish)).